We begin with the raw amino-acid sequence, 460 residues long: Telomere-binding protein homolog (460 aa).

This sequence belongs to the telombin family.

It is found in the nucleus. The protein resides in the chromosome. It localises to the telomere. May bind telomeric T4G4 sequences. In Euplotes crassus, this protein is Telomere-binding protein homolog.